Reading from the N-terminus, the 217-residue chain is GTP cyclohydrolase 1 (217 aa).

Residues cysteine 109, histidine 112, and cysteine 180 each coordinate Zn(2+).

Belongs to the GTP cyclohydrolase I family. In terms of assembly, homomer.

It carries out the reaction GTP + H2O = 7,8-dihydroneopterin 3'-triphosphate + formate + H(+). It functions in the pathway cofactor biosynthesis; 7,8-dihydroneopterin triphosphate biosynthesis; 7,8-dihydroneopterin triphosphate from GTP: step 1/1. The sequence is that of GTP cyclohydrolase 1 from Aliivibrio salmonicida (strain LFI1238) (Vibrio salmonicida (strain LFI1238)).